A 145-amino-acid polypeptide reads, in one-letter code: D-aminoacyl-tRNA deacylase (145 aa).

The Gly-cisPro motif, important for rejection of L-amino acids signature appears at glycine 137 to proline 138.

This sequence belongs to the DTD family. In terms of assembly, homodimer.

Its subcellular location is the cytoplasm. It carries out the reaction glycyl-tRNA(Ala) + H2O = tRNA(Ala) + glycine + H(+). It catalyses the reaction a D-aminoacyl-tRNA + H2O = a tRNA + a D-alpha-amino acid + H(+). In terms of biological role, an aminoacyl-tRNA editing enzyme that deacylates mischarged D-aminoacyl-tRNAs. Also deacylates mischarged glycyl-tRNA(Ala), protecting cells against glycine mischarging by AlaRS. Acts via tRNA-based rather than protein-based catalysis; rejects L-amino acids rather than detecting D-amino acids in the active site. By recycling D-aminoacyl-tRNA to D-amino acids and free tRNA molecules, this enzyme counteracts the toxicity associated with the formation of D-aminoacyl-tRNA entities in vivo and helps enforce protein L-homochirality. The chain is D-aminoacyl-tRNA deacylase from Pelobacter propionicus (strain DSM 2379 / NBRC 103807 / OttBd1).